A 250-amino-acid polypeptide reads, in one-letter code: Proteasome subunit alpha type-4-A (250 aa).

Glycyl lysine isopeptide (Lys-Gly) (interchain with G-Cter in ubiquitin) cross-links involve residues Lys-40 and Lys-64.

The protein belongs to the peptidase T1A family. As to quaternary structure, component of the 20S core complex of the 26S proteasome. The 26S proteasome is composed of a core protease (CP), known as the 20S proteasome, capped at one or both ends by the 19S regulatory particle (RP/PA700). The 20S proteasome core is composed of 28 subunits that are arranged in four stacked rings, resulting in a barrel-shaped structure. The two end rings are each formed by seven alpha subunits, and the two central rings are each formed by seven beta subunits. The catalytic chamber with the active sites is on the inside of the barrel. Ubiquitous low levels, higher expression in siliques and flowers.

It localises to the cytoplasm. It is found in the nucleus. The proteasome is a multicatalytic proteinase complex which is characterized by its ability to cleave peptides with Arg, Phe, Tyr, Leu, and Glu adjacent to the leaving group at neutral or slightly basic pH. The proteasome has an ATP-dependent proteolytic activity. The sequence is that of Proteasome subunit alpha type-4-A (PAC1) from Arabidopsis thaliana (Mouse-ear cress).